The following is a 1822-amino-acid chain: Sperm flagellar protein 2 (1822 aa).

The Calponin-homology (CH) domain occupies 1-105 (MSEILCQWLN…LLYQLYIALQ (105 aa)). 4 coiled-coil regions span residues 227-260 (KALE…KDLQ), 321-396 (AHEA…KQAK), 732-758 (NQAQ…KAQK), and 871-909 (CEKV…LAEL). Disordered regions lie at residues 896-1004 (KEAE…VPQP), 1278-1327 (EEEK…EATP), 1664-1718 (SIPS…NNEK), and 1803-1822 (EHVQ…EEKK). A compositionally biased stretch (pro residues) spans 911 to 920 (LPTPPPAPPP). 2 stretches are compositionally biased toward basic and acidic residues: residues 921–930 (EPEKEKEIHQ) and 949–968 (PHGK…ETAL). Low complexity predominate over residues 975–987 (KGKSSGGKVPVKK). 2 stretches are compositionally biased toward basic and acidic residues: residues 1278-1292 (EEEK…KEKS) and 1303-1314 (KEPPKKKQEDKK). The interaction with IFT20 stretch occupies residues 1324 to 1676 (EATPVIVTTE…SAEKTSSTDA (353 aa)). A coiled-coil region spans residues 1686-1712 (EENAAREERKLKDDTEKREQKDEEIPE). Positions 1688 to 1708 (NAAREERKLKDDTEKREQKDE) are enriched in basic and acidic residues.

As to quaternary structure, interacts (via C-terminus) with IFT20. Interacts with DYNC1I2.

Its subcellular location is the cell projection. It localises to the cilium. The protein resides in the flagellum. It is found in the cytoplasm. The protein localises to the golgi apparatus. In terms of biological role, required for correct axoneme development in spermatozoa. Important for normal development of the manchette and sperm head morphology. Essential for male fertility. Plays a role in localization of the intraflagellar transport protein IFT20 to the manchette, suggesting function as an adapter for dynein-mediated protein transport during spermatogenesis. Also plays a role in bone growth where it seems to be required for normal osteoblast differentiation. The protein is Sperm flagellar protein 2 (SPEF2) of Homo sapiens (Human).